Consider the following 353-residue polypeptide: B1 bradykinin receptor (353 aa).

Topologically, residues 1–40 (MASSWPPLELQSSNQSQLFPQNATACDNAPEAWDLLHRVL) are extracellular. N-linked (GlcNAc...) asparagine glycans are attached at residues asparagine 14 and asparagine 22. The chain crosses the membrane as a helical span at residues 41-64 (PTFIISICFFGLLGNLFVLLVFLL). Topologically, residues 65–73 (PRRQLNVAE) are cytoplasmic. A helical transmembrane segment spans residues 74–98 (IYLANLAASDLVFVLGLPFWAENIW). At 99–111 (NQFNWPFGALLCR) the chain is on the extracellular side. A disulfide bridge connects residues cysteine 110 and cysteine 189. The chain crosses the membrane as a helical span at residues 112 to 133 (VINGVIKANLFISIFLVVAISQ). Residues 134-155 (DRYRVLVHPMASRRQQRRRQAR) are Cytoplasmic-facing. Residues 156-178 (VTCVLIWVVGGLLSIPTFLLRSI) form a helical membrane-spanning segment. Residues 179–199 (QAVPDLNITACILLLPHEAWH) lie on the Extracellular side of the membrane. N-linked (GlcNAc...) asparagine glycosylation is present at asparagine 185. A helical membrane pass occupies residues 200–226 (FARIVELNILGFLLPLAAIVFFNYHIL). Topologically, residues 227–247 (ASLRTREEVSRTRCGGRKDSK) are cytoplasmic. Residues 248–272 (TTALILTLVVAFLVCWAPYHFFAFL) traverse the membrane as a helical segment. The Extracellular segment spans residues 273-291 (EFLFQVQAVRGCFWEDFID). Residues 292 to 314 (LGLQLANFFAFTNSSLNPVIYVF) form a helical membrane-spanning segment. Over 315 to 353 (VGRLFRTKVWELYKQCTPKSLAPISSSHRKEIFQLFWRN) the chain is Cytoplasmic. The S-palmitoyl cysteine moiety is linked to residue cysteine 330.

The protein belongs to the G-protein coupled receptor 1 family. Bradykinin receptor subfamily. BDKRB1 sub-subfamily.

The protein resides in the cell membrane. In terms of biological role, this is a receptor for bradykinin. Could be a factor in chronic pain and inflammation. The sequence is that of B1 bradykinin receptor (BDKRB1) from Homo sapiens (Human).